A 358-amino-acid polypeptide reads, in one-letter code: MGRKQQYGTLASIAAKLGISRTTVSNAYNRPEQLSAELRQRILDTAEDMGYLGPDPVARSLRTRRAGAIGVLLTEDLTYAFEDMASVDFLAGVAQAAGDTQLTLIPASPASSVDHVSAQQLVNNAAVDGVVIYSVAKGDPHIDAIRARGLPAVIADQPAREEGMPFIAPNNRKAIAPAAQALIDAGHRKIGILSIRLDRANNDGEVTRERLENAQYQVQRDRVRGAMEVFIEAGIDPGTVPIMECWINNRQHNFEVAKELLETHPDLTAVLCTVDALAFGVLEYLKSVGKSAPADLSLTGFDGTHMALARDLTTVIQPNKLKGFKAGETLLKMIDKEYVEPEVELETSFHPGSTVAPI.

Positions 8–63 constitute an HTH lacI-type domain; sequence GTLASIAAKLGISRTTVSNAYNRPEQLSAELRQRILDTAEDMGYLGPDPVARSLRT. The segment at residues 10-29 is a DNA-binding region (H-T-H motif); it reads LASIAAKLGISRTTVSNAYN.

In terms of assembly, homodimer.

With respect to regulation, myo-inositol causes the dissociation of the IpsA-DNA complex in vitro. In terms of biological role, plays a role in the regulation of cell wall biogenesis. Inositol-dependent transcriptional activator of ino1, which encodes inositol phosphate synthase. Also regulates other target genes, which are most likely involved in the synthesis of inositol-derived cell wall components and mycothiol. Acts by binding to a conserved palindromic motif within the promoter regions. The polypeptide is HTH-type transcriptional regulator IpsA (Corynebacterium glutamicum (strain ATCC 13032 / DSM 20300 / JCM 1318 / BCRC 11384 / CCUG 27702 / LMG 3730 / NBRC 12168 / NCIMB 10025 / NRRL B-2784 / 534)).